A 439-amino-acid chain; its full sequence is MVKVLLVGGGGREHAIGEALVKGGAELYVVSKHKNPGLARIAKDYGLARETDVEKVVEFAEKWKVDFAFIGPEAPLEAGVVNALEERGIPAVGPTKEAARLETNKAWAREFMERNKIPGRKLFRVFDDPKEMKEWIDEFGKPVVVKPLGLTGGKGVKVVGYQLKDNEEAKEYAEYLIRKDGKVLIEERTDGVEFTFQVFSDGKKVVPMPLAQDYPHAYEGDVGPITGGMGSYSCSNHLLPFITKSDWEKALETLQKTVEAMYKEGYPYKGILYGQFMLSKDGPVIIEYNARFGDPEAINVLSILEDNLVEISERIIDGNLRDVKFSNMATVVKYIAPQGYPENPIKGVRIEVNEDKIREEGARLIFASIDENYTLLGSRALAVVGVSENLEEAEKIAQSAIRHVKGPIFYRKDVGTRESIEKRIKIMKSLRGDFDVNSC.

The 209-residue stretch at 109-317 (REFMERNKIP…LVEISERIID (209 aa)) folds into the ATP-grasp domain. Residue 136-195 (IDEFGKPVVVKPLGLTGGKGVKVVGYQLKDNEEAKEYAEYLIRKDGKVLIEERTDGVEFT) participates in ATP binding. Mg(2+) contacts are provided by Gln-275, Glu-287, and Asn-289. Mn(2+) is bound by residues Gln-275, Glu-287, and Asn-289.

It belongs to the GARS family. It depends on Mg(2+) as a cofactor. Mn(2+) serves as cofactor.

It catalyses the reaction 5-phospho-beta-D-ribosylamine + glycine + ATP = N(1)-(5-phospho-beta-D-ribosyl)glycinamide + ADP + phosphate + H(+). It functions in the pathway purine metabolism; IMP biosynthesis via de novo pathway; N(1)-(5-phospho-D-ribosyl)glycinamide from 5-phospho-alpha-D-ribose 1-diphosphate: step 2/2. This is Phosphoribosylamine--glycine ligase from Pyrococcus furiosus (strain ATCC 43587 / DSM 3638 / JCM 8422 / Vc1).